The sequence spans 393 residues: Beta-1,4-galactosyltransferase 3 (393 aa).

The Cytoplasmic portion of the chain corresponds to 1–10; the sequence is MLRRLLERPC. The chain crosses the membrane as a helical; Signal-anchor for type II membrane protein span at residues 11–31; sequence TLALLVGSQLAVMMYLSLGGF. Topologically, residues 32-393 are lumenal; that stretch reads RSLSALFGRD…ANHTALRGSH (362 aa). The N-linked (GlcNAc...) asparagine glycan is linked to Asn57. An intrachain disulfide couples Cys77 to Cys119. 130-134 is a binding site for UDP-alpha-D-galactose; that stretch reads PHRAR. Asn166 is a glycosylation site (N-linked (GlcNAc...) asparagine). UDP-alpha-D-galactose contacts are provided by residues 169-171, 196-197, Tyr226, and Trp258; these read FNR and VD. Cys190 and Cys209 are oxidised to a cystine. Residue Asp197 coordinates Mn(2+). 260–263 contacts N-acetyl-D-glucosamine; the sequence is GEDD. Position 291 (His291) interacts with Mn(2+). 291–293 lines the UDP-alpha-D-galactose pocket; sequence HRG. Arg303 contacts N-acetyl-D-glucosamine. Asn337 and Asn385 each carry an N-linked (GlcNAc...) asparagine glycan. Residues 339–393 are disordered; sequence TADIGTDPRGPRAPSGPRYPPGSSQAFRQEMLQRRPPARPGPPPTANHTALRGSH.

Belongs to the glycosyltransferase 7 family. It depends on Mn(2+) as a cofactor.

The protein resides in the golgi apparatus. Its subcellular location is the golgi stack membrane. It carries out the reaction an N-acetyl-beta-D-glucosaminyl derivative + UDP-alpha-D-galactose = a beta-D-galactosyl-(1-&gt;4)-N-acetyl-beta-D-glucosaminyl derivative + UDP + H(+). The enzyme catalyses N-acetyl-D-glucosamine + UDP-alpha-D-galactose = beta-D-galactosyl-(1-&gt;4)-N-acetyl-D-glucosamine + UDP + H(+). It catalyses the reaction a beta-D-GlcNAc-(1-&gt;3)-beta-D-Gal-(1-&gt;4)-beta-D-Glc-(1&lt;-&gt;1)-Cer(d18:1(4E)) + UDP-alpha-D-galactose = a neolactoside nLc4Cer(d18:1(4E)) + UDP + H(+). The catalysed reaction is a beta-D-glucosylceramide + UDP-alpha-D-galactose = a beta-D-galactosyl-(1-&gt;4)-beta-D-glucosyl-(1&lt;-&gt;1)-ceramide + UDP + H(+). It carries out the reaction a neolactoside IV(3)-beta-GlcNAc-nLc4Cer + UDP-alpha-D-galactose = a neolactoside nLc6Cer + UDP + H(+). Its pathway is protein modification; protein glycosylation. Responsible for the synthesis of complex-type N-linked oligosaccharides in many glycoproteins as well as the carbohydrate moieties of glycolipids. This Pongo abelii (Sumatran orangutan) protein is Beta-1,4-galactosyltransferase 3 (B4GALT3).